A 694-amino-acid chain; its full sequence is MAFLWISFLVFLGSGSGCHHRICHCSDRVFICQESKVTEIPSDIPRNTVEMRFVLTKLQVIPRGAFSGFRDLEKIEISQNDALEVIEADVFSNLPKLHEIRIEKANNLVLIDPEAFWNLPNLRYLLISNTGIKHLPAVYKIQSHQKVLLDIQDNINIRTIERNSFAGLSSESEILWLNKNGIQEIQNQAFNGTQLDELNLSDNINLEDLPNGIFQGANGPVILDISRTRIHSLPSDGLKNLKKLKARSAYNFKTLPNLDKFAELVEANLTYPSHCCAFANWRRQAFELHPICNKSFVRQDSDDLAMDWGHRRRSVEEEYVSNLDKGFDITDTELDYDLCNEVVDVACSPKPDAFNPCEDIMGYNFLRVLIWFISILSITGNIVVLVILITSQYKLTVPRFLMCNLAFADLCIGIYLLLIASVDIHTKSQYHNYAIDWQTGAGCDAAGFFTVFASELSVYTLTAITLERWHTITYAMQLDRKVRLRHAASIMLIGWIFAFSVALLPIFGVSSYMKVSICLPMDIDSPLSQFYVISLLVLNVLASVIICTCYTHIYFTVRNPNIISSTSDAKIAKRMAMLIFTDFLCMAPISFFAISASVKMPLITVSKSKILLVLFYPINSCANPFLYAVFTKTFRRDFFILLSKFGCCEMQAQIYRTETSSTVHSSHPRNGQCPLMAKSNSGAVYKLVPLNHLS.

Residues 1 to 17 form the signal peptide; the sequence is MAFLWISFLVFLGSGSG. 2 disulfide bridges follow: Cys18/Cys25 and Cys23/Cys32. Residues 18–46 enclose the LRRNT domain; sequence CHHRICHCSDRVFICQESKVTEIPSDIPR. Topologically, residues 18–367 are extracellular; it reads CHHRICHCSD…EDIMGYNFLR (350 aa). LRR repeat units follow at residues 49–72, 73–97, 98–118, 119–143, 144–169, 170–192, 193–216, 217–240, and 241–259; these read VEMR…FRDL, EKIE…LPKL, HEIR…AFWN, LPNL…KIQS, HQKV…AGLS, SESE…AFNG, TQLD…IFQG, ANGP…GLKN, and LKKL…PNLD. N-linked (GlcNAc...) asparagine glycosylation is found at Asn191 and Asn199. N-linked (GlcNAc...) asparagine glycosylation occurs at Asn268. Intrachain disulfides connect Cys275–Cys347, Cys276–Cys292, Cys276–Cys357, and Cys292–Cys339. Residue Asn293 is glycosylated (N-linked (GlcNAc...) asparagine). Sulfotyrosine is present on Tyr336. The chain crosses the membrane as a helical span at residues 368 to 388; that stretch reads VLIWFISILSITGNIVVLVIL. The Cytoplasmic segment spans residues 389–399; the sequence is ITSQYKLTVPR. Residues 400-422 form a helical membrane-spanning segment; sequence FLMCNLAFADLCIGIYLLLIASV. Residues 423–444 lie on the Extracellular side of the membrane; the sequence is DIHTKSQYHNYAIDWQTGAGCD. Cys443 and Cys518 form a disulfide bridge. A helical membrane pass occupies residues 445-466; it reads AAGFFTVFASELSVYTLTAITL. Residues 467–486 lie on the Cytoplasmic side of the membrane; the sequence is ERWHTITYAMQLDRKVRLRH. The chain crosses the membrane as a helical span at residues 487-509; the sequence is AASIMLIGWIFAFSVALLPIFGV. Topologically, residues 510–529 are extracellular; that stretch reads SSYMKVSICLPMDIDSPLSQ. Residues 530 to 551 traverse the membrane as a helical segment; that stretch reads FYVISLLVLNVLASVIICTCYT. The Cytoplasmic portion of the chain corresponds to 552-574; it reads HIYFTVRNPNIISSTSDAKIAKR. A helical membrane pass occupies residues 575-598; that stretch reads MAMLIFTDFLCMAPISFFAISASV. Residues 599–609 lie on the Extracellular side of the membrane; the sequence is KMPLITVSKSK. A helical membrane pass occupies residues 610–631; that stretch reads ILLVLFYPINSCANPFLYAVFT. Residues 632-694 are Cytoplasmic-facing; that stretch reads KTFRRDFFIL…YKLVPLNHLS (63 aa).

It belongs to the G-protein coupled receptor 1 family. FSH/LSH/TSH subfamily. Homotrimer. Functions as a homotrimer binding the FSH hormone heterodimer composed of CGA and FSHB. Interacts with ARRB2. Interacts with APPL2; interaction is independent of follicle stimulating hormone stimulation. N-glycosylated; indirectly required for FSH-binding, possibly via a conformational change that allows high affinity binding of hormone. Post-translationally, sulfated.

The protein resides in the cell membrane. Functionally, g protein-coupled receptor for follitropin, the follicle-stimulating hormone. Through cAMP production activates the downstream PI3K-AKT and ERK1/ERK2 signaling pathways. This is Follicle-stimulating hormone receptor (FSHR) from Notamacropus eugenii (Tammar wallaby).